Here is a 391-residue protein sequence, read N- to C-terminus: Inner membrane protein YdcO (391 aa).

Residues M1 to P9 lie on the Cytoplasmic side of the membrane. The chain crosses the membrane as a helical span at residues T10–W30. The Periplasmic portion of the chain corresponds to Q31–Q42. A helical membrane pass occupies residues I43–L63. Residues W64–A93 are Cytoplasmic-facing. The helical transmembrane segment at I94–A114 threads the bilayer. Residues R115–S123 lie on the Periplasmic side of the membrane. The helical transmembrane segment at L124 to L144 threads the bilayer. Over D145–R167 the chain is Cytoplasmic. A helical transmembrane segment spans residues Y168–V188. Residues T189–T200 are Periplasmic-facing. The helical transmembrane segment at Y201 to V221 threads the bilayer. The Cytoplasmic segment spans residues T222–L246. The helical transmembrane segment at I247–I267 threads the bilayer. Residues A268–R287 lie on the Periplasmic side of the membrane. Residues W288–I308 form a helical membrane-spanning segment. At T309–M311 the chain is on the cytoplasmic side. Residues M312–I332 form a helical membrane-spanning segment. The Periplasmic portion of the chain corresponds to G333 to T361. The chain crosses the membrane as a helical span at residues L362–L382. The Cytoplasmic portion of the chain corresponds to N383 to Y391.

The protein localises to the cell inner membrane. In Escherichia coli (strain K12), this protein is Inner membrane protein YdcO (ydcO).